The sequence spans 278 residues: Large ribosomal subunit protein uL2 (278 aa).

2 disordered regions span residues 1 to 58 (MAIR…GGGH) and 225 to 278 (VMNP…KNKR). Residues 37 to 58 (LHGRGGRNAHGRITTRHKGGGH) show a composition bias toward basic residues. A compositionally biased stretch (basic and acidic residues) spans 253-267 (PEGRTRKNKASDKMI). Residues 268-278 (VRRRRTGKNKR) are compositionally biased toward basic residues.

The protein belongs to the universal ribosomal protein uL2 family. As to quaternary structure, part of the 50S ribosomal subunit. Forms a bridge to the 30S subunit in the 70S ribosome.

In terms of biological role, one of the primary rRNA binding proteins. Required for association of the 30S and 50S subunits to form the 70S ribosome, for tRNA binding and peptide bond formation. It has been suggested to have peptidyltransferase activity; this is somewhat controversial. Makes several contacts with the 16S rRNA in the 70S ribosome. The polypeptide is Large ribosomal subunit protein uL2 (Rhodococcus erythropolis (strain PR4 / NBRC 100887)).